The sequence spans 465 residues: Adenosylhomocysteinase (465 aa).

3 residues coordinate substrate: threonine 56, aspartate 131, and glutamate 191. 192-194 provides a ligand contact to NAD(+); that stretch reads TTT. Substrate is bound by residues lysine 221 and aspartate 225. NAD(+) contacts are provided by residues asparagine 226, 255-260, glutamate 278, asparagine 313, 334-336, and asparagine 379; these read GYGDVG and IGH.

This sequence belongs to the adenosylhomocysteinase family. Requires NAD(+) as cofactor.

It localises to the cytoplasm. It carries out the reaction S-adenosyl-L-homocysteine + H2O = L-homocysteine + adenosine. The protein operates within amino-acid biosynthesis; L-homocysteine biosynthesis; L-homocysteine from S-adenosyl-L-homocysteine: step 1/1. Functionally, may play a key role in the regulation of the intracellular concentration of adenosylhomocysteine. The protein is Adenosylhomocysteinase of Bartonella henselae (strain ATCC 49882 / DSM 28221 / CCUG 30454 / Houston 1) (Rochalimaea henselae).